The primary structure comprises 373 residues: MTSNQQRVVVKVGSSSLTSLHGEISSKKLEKLVEQIVRLKDEGHEVLLVSSGAVAAGYRKLGFINRPDTLPEKQASASVGQGLLIEAYSKLFLSHGYIASQILITKSDFSDEKRYNNVRNTMNVLLKRGIIPIINENDTVTVNRLKFGDNDTLSAKVAGLIDADLLTILSDIDGLYDANPRKTPDAALVQEVTEITPEIEASAGDAGSEVGTGGMKSKLDAFKITMASGIKGFLGRADTPGILHEAICGTARGTYFIPNADSHALNHKKQWIAFNSGPEGDIVVHNESKEFIIDRKKSLYPSSIYDINGRFSNGSVVRILDQEGEEIGLGVVNFSSSQLRKWKKDTNQETAASSQAVVDREAFVCHLELSVPL.

K11 is an ATP binding site. The substrate site is built by S51, D138, and N150. ATP is bound by residues 170 to 171 (SD) and 212 to 218 (TGGMKSK). The PUA domain occupies 279 to 355 (EGDIVVHNES…TNQETAASSQ (77 aa)).

This sequence belongs to the glutamate 5-kinase family.

The protein resides in the cytoplasm. The enzyme catalyses L-glutamate + ATP = L-glutamyl 5-phosphate + ADP. It participates in amino-acid biosynthesis; L-proline biosynthesis; L-glutamate 5-semialdehyde from L-glutamate: step 1/2. Functionally, catalyzes the transfer of a phosphate group to glutamate to form L-glutamate 5-phosphate. The sequence is that of Glutamate 5-kinase 2 from Bacillus licheniformis (strain ATCC 14580 / DSM 13 / JCM 2505 / CCUG 7422 / NBRC 12200 / NCIMB 9375 / NCTC 10341 / NRRL NRS-1264 / Gibson 46).